The primary structure comprises 387 residues: RNA polymerase II elongation factor ELL3 (387 aa).

2 disordered regions span residues 127-148 (LTEG…EGHP) and 186-275 (LSNR…EEVP). Positions 230–239 (SPLQGLSNQD) are enriched in polar residues. The residue at position 240 (serine 240) is a Phosphoserine. Positions 240–251 (SPEEQDWGQDAD) are enriched in acidic residues. Residues 257–271 (EQSLSVQSASESPSP) show a composition bias toward low complexity. An OCEL domain is found at 275 to 385 (PDYLLQYSTI…LILEFEEKNR (111 aa)).

This sequence belongs to the ELL/occludin family. Interacts with AFF4. Component of the super elongation complex (SEC), at least composed of EAF1, EAF2, CDK9, MLLT3/AF9, AFF (AFF1 or AFF4), the P-TEFb complex and ELL (ELL, ELL2 or ELL3). Component of the little elongation complex (LEC), at least composed of ELL (ELL, ELL2 or ELL3), ZC3H8, ICE1 and ICE2.

The protein localises to the nucleus. In terms of biological role, enhancer-binding elongation factor that specifically binds enhancers in embryonic stem cells (ES cells), marks them, and is required for their future activation during stem cell specification. Elongation factor component of the super elongation complex (SEC), a complex required to increase the catalytic rate of RNA polymerase II transcription by suppressing transient pausing by the polymerase at multiple sites along the DNA. Component of the little elongation complex (LEC), a complex required to regulate small nuclear RNA (snRNA) gene transcription by RNA polymerase II and III. Does not only bind to enhancer regions of active genes, but also marks the enhancers that are in a poised or inactive state in ES cells and is required for establishing proper RNA polymerase II occupancy at developmentally regulated genes in a cohesin-dependent manner. Probably required for priming developmentally regulated genes for later recruitment of the super elongation complex (SEC), for transcriptional activation during differentiation. Required for recruitment of P-TEFb within SEC during differentiation. Probably preloaded on germ cell chromatin, suggesting that it may prime gene activation by marking enhancers as early as in the germ cells. Promoting epithelial-mesenchymal transition (EMT). In Rattus norvegicus (Rat), this protein is RNA polymerase II elongation factor ELL3 (Ell3).